The sequence spans 274 residues: Thymidylate synthase (274 aa).

R21 contributes to the dUMP binding site. H51 contributes to the (6R)-5,10-methylene-5,6,7,8-tetrahydrofolate binding site. DUMP is bound at residue 123-124 (RR). Residue C156 is the Nucleophile of the active site. DUMP-binding positions include 176–179 (RSAD), N187, and 217–219 (HIY). Position 179 (D179) interacts with (6R)-5,10-methylene-5,6,7,8-tetrahydrofolate. Residue S273 coordinates (6R)-5,10-methylene-5,6,7,8-tetrahydrofolate.

Belongs to the thymidylate synthase family. Bacterial-type ThyA subfamily. As to quaternary structure, homodimer.

It localises to the cytoplasm. The catalysed reaction is dUMP + (6R)-5,10-methylene-5,6,7,8-tetrahydrofolate = 7,8-dihydrofolate + dTMP. It participates in pyrimidine metabolism; dTTP biosynthesis. In terms of biological role, catalyzes the reductive methylation of 2'-deoxyuridine-5'-monophosphate (dUMP) to 2'-deoxythymidine-5'-monophosphate (dTMP) while utilizing 5,10-methylenetetrahydrofolate (mTHF) as the methyl donor and reductant in the reaction, yielding dihydrofolate (DHF) as a by-product. This enzymatic reaction provides an intracellular de novo source of dTMP, an essential precursor for DNA biosynthesis. This is Thymidylate synthase from Francisella tularensis subsp. tularensis (strain SCHU S4 / Schu 4).